The following is a 677-amino-acid chain: Methionine--tRNA ligase (677 aa).

Positions 15 to 25 (PYANGSIHLGH) match the 'HIGH' region motif. The Zn(2+) site is built by cysteine 146, cysteine 149, cysteine 159, and cysteine 162. The 'KMSKS' region motif lies at 333–337 (KMSKS). An ATP-binding site is contributed by lysine 336. The 103-residue stretch at 575–677 (DFAKVDLRVA…AGAKPGHQVK (103 aa)) folds into the tRNA-binding domain.

The protein belongs to the class-I aminoacyl-tRNA synthetase family. MetG type 1 subfamily. As to quaternary structure, homodimer. It depends on Zn(2+) as a cofactor.

It is found in the cytoplasm. It carries out the reaction tRNA(Met) + L-methionine + ATP = L-methionyl-tRNA(Met) + AMP + diphosphate. Is required not only for elongation of protein synthesis but also for the initiation of all mRNA translation through initiator tRNA(fMet) aminoacylation. The chain is Methionine--tRNA ligase from Shigella dysenteriae serotype 1 (strain Sd197).